A 409-amino-acid polypeptide reads, in one-letter code: Phosphatidylserine decarboxylase proenzyme, mitochondrial (409 aa).

The transit peptide at Met1–Lys52 directs the protein to the mitochondrion. Topologically, residues Ile53–Leu63 are mitochondrial matrix. Residues Leu64–Gln82 traverse the membrane as a helical segment. Over Tyr83–Leu409 the chain is Mitochondrial intermembrane. Catalysis depends on charge relay system; for autoendoproteolytic cleavage activity residues Asp191, His267, and Ser378. Ser378 acts as the Schiff-base intermediate with substrate; via pyruvic acid; for decarboxylase activity in catalysis. Ser378 is subject to Pyruvic acid (Ser); by autocatalysis.

This sequence belongs to the phosphatidylserine decarboxylase family. PSD-B subfamily. Eukaryotic type I sub-subfamily. In terms of assembly, heterodimer of a large membrane-associated beta subunit and a small pyruvoyl-containing alpha subunit. The cofactor is pyruvate. Post-translationally, is synthesized initially as an inactive proenzyme. Formation of the active enzyme involves a self-maturation process in which the active site pyruvoyl group is generated from an internal serine residue via an autocatalytic post-translational modification. Two non-identical subunits are generated from the proenzyme in this reaction, and the pyruvate is formed at the N-terminus of the alpha chain, which is derived from the carboxyl end of the proenzyme. The autoendoproteolytic cleavage occurs by a canonical serine protease mechanism, in which the side chain hydroxyl group of the serine supplies its oxygen atom to form the C-terminus of the beta chain, while the remainder of the serine residue undergoes an oxidative deamination to produce ammonia and the pyruvoyl prosthetic group on the alpha chain. During this reaction, the Ser that is part of the protease active site of the proenzyme becomes the pyruvoyl prosthetic group, which constitutes an essential element of the active site of the mature decarboxylase.

It localises to the mitochondrion inner membrane. Its subcellular location is the cytoplasm. It is found in the lipid droplet. The enzyme catalyses a 1,2-diacyl-sn-glycero-3-phospho-L-serine + H(+) = a 1,2-diacyl-sn-glycero-3-phosphoethanolamine + CO2. Its pathway is phospholipid metabolism; phosphatidylethanolamine biosynthesis. Its function is as follows. Catalyzes the formation of phosphatidylethanolamine (PtdEtn) from phosphatidylserine (PtdSer). Plays a central role in phospholipid metabolism and in the interorganelle trafficking of phosphatidylserine. May be involved in lipid droplet biogenesis at the endoplasmic reticulum membrane. This chain is Phosphatidylserine decarboxylase proenzyme, mitochondrial, found in Cricetulus griseus (Chinese hamster).